The chain runs to 269 residues: Nuclear egress protein 2 (269 aa).

The Perinuclear space segment spans residues 1-247 (MSRRTYVRSE…VWKLALPVAN (247 aa)). The chain crosses the membrane as a helical span at residues 248–268 (VTYALFIVIVLVVVLGAVLFW). Position 269 (Lys269) is a topological domain, nuclear.

Belongs to the herpesviridae NEC2 protein family. As to quaternary structure, forms a heterohexameric complex with NEC1. Phosphorylated.

Its subcellular location is the host nucleus inner membrane. Plays an essential role in virion nuclear egress, the first step of virion release from infected cell. Within the host nucleus, NEC1 interacts with the newly formed capsid through the vertexes and directs it to the inner nuclear membrane by associating with NEC2. Induces the budding of the capsid at the inner nuclear membrane as well as its envelopment into the perinuclear space. There, the NEC1/NEC2 complex promotes the fusion of the enveloped capsid with the outer nuclear membrane and the subsequent release of the viral capsid into the cytoplasm where it will reach the secondary budding sites in the host Golgi or trans-Golgi network. The polypeptide is Nuclear egress protein 2 (Homo sapiens (Human)).